The following is a 276-amino-acid chain: uncharacterized protein (276 aa).

10 consecutive transmembrane segments (helical) span residues 5–25 (IVLALTVTFWGLAFTAIKYSV), 31–51 (IAIASLRFAIANTLFAVIIIL), 63–83 (VFALGIFGVSVYHVFLNLGEV), 89–109 (VASVVISLAPIFVLILSAIFL), 119–139 (VGIIIAFLGVVVISEPSYANI), 142–162 (IALVMVSTVAAAIYTTFGKSL), 168–188 (PITLTSNAMVLGSIPLYPFLP), 200–220 (LIGSIVFLGIFSTFFGYLGWY), 231–251 (ASVFLLAIPVVSLLAGNILLA), and 253–273 (PLTLRTVAGSGLVLLGIYIVV). EamA domains follow at residues 12–133 (TFWG…VISE) and 150–274 (VAAA…IVVR).

This sequence belongs to the EamA transporter family.

The protein resides in the cell membrane. This is an uncharacterized protein from Archaeoglobus fulgidus (strain ATCC 49558 / DSM 4304 / JCM 9628 / NBRC 100126 / VC-16).